We begin with the raw amino-acid sequence, 270 residues long: Tryptophan synthase alpha chain (270 aa).

Catalysis depends on proton acceptor residues E49 and D60.

This sequence belongs to the TrpA family. As to quaternary structure, tetramer of two alpha and two beta chains.

It carries out the reaction (1S,2R)-1-C-(indol-3-yl)glycerol 3-phosphate + L-serine = D-glyceraldehyde 3-phosphate + L-tryptophan + H2O. It functions in the pathway amino-acid biosynthesis; L-tryptophan biosynthesis; L-tryptophan from chorismate: step 5/5. Functionally, the alpha subunit is responsible for the aldol cleavage of indoleglycerol phosphate to indole and glyceraldehyde 3-phosphate. This is Tryptophan synthase alpha chain from Gluconobacter oxydans (strain 621H) (Gluconobacter suboxydans).